Consider the following 942-residue polypeptide: Protein inturned (942 aa).

Positions 1 to 52 (MASVASCDSRPSSDELPGDPSSQEEDEDYDFEDRVSDSGSYSSASSDYDDLE) are disordered. Residues 22–31 (SQEEDEDYDF) are compositionally biased toward acidic residues. The segment covering 37–46 (DSGSYSSASS) has biased composition (low complexity). In terms of domain architecture, PDZ spans 185–263 (LVGIIHQTKW…PMQVKLTFEN (79 aa)). 2 positions are modified to phosphoserine: Ser670 and Ser674. Residues 704–754 (TRKPSPSCSSGGSDNGCEGGEDDGFSPHTTPDAVRKQRESQGSDGLEESGT) form a disordered region.

It belongs to the inturned family. As to quaternary structure, component of the CPLANE (ciliogenesis and planar polarity effectors) complex, composed of INTU, FUZ and WDPCP. Interacts with CPLANE1. Interacts with NPHP4 and DAAM1; INTU is mediating the interaction between NPHP4 and DAAM1.

It is found in the cytoplasm. It localises to the cell surface. Its subcellular location is the cytoskeleton. The protein localises to the cilium basal body. The protein resides in the microtubule organizing center. It is found in the centrosome. It localises to the centriole. Its function is as follows. Plays a key role in ciliogenesis and embryonic development. Regulator of cilia formation by controlling the organization of the apical actin cytoskeleton and the positioning of the basal bodies at the apical cell surface, which in turn is essential for the normal orientation of elongating ciliary microtubules. Plays a key role in definition of cell polarity via its role in ciliogenesis but not via conversion extension. Has an indirect effect on hedgehog signaling. Proposed to function as core component of the CPLANE (ciliogenesis and planar polarity effectors) complex involved in the recruitment of peripheral IFT-A proteins to basal bodies. Required for recruitment of CPLANE2 to the mother centriole. Binds phosphatidylinositol 3-phosphate with highest affinity, followed by phosphatidylinositol 4-phosphate and phosphatidylinositol 5-phosphate. In Homo sapiens (Human), this protein is Protein inturned (INTU).